The primary structure comprises 150 residues: Arginine repressor (150 aa).

The protein belongs to the ArgR family.

The protein localises to the cytoplasm. Its pathway is amino-acid biosynthesis; L-arginine biosynthesis [regulation]. In terms of biological role, regulates arginine biosynthesis genes. The protein is Arginine repressor of Clostridium botulinum (strain 657 / Type Ba4).